Consider the following 759-residue polypeptide: Glucosylceramidase (759 aa).

Residue E247 is the Proton donor of the active site. Residue E497 is the Nucleophile of the active site. Positions 576–600 are disordered; the sequence is AFENESQRDPQSPAYSESQRNTESY. Residues 584-599 are compositionally biased toward polar residues; sequence DPQSPAYSESQRNTES.

Belongs to the glycosyl hydrolase 5 (cellulase A) family.

Its subcellular location is the membrane. It catalyses the reaction a beta-D-glucosyl-(1&lt;-&gt;1')-N-acylsphing-4-enine + H2O = an N-acylsphing-4-enine + D-glucose. Specifically hydrolyzes the glucosidic linkage in glucosylceramide. May prevent accumulation of aberrent glucosylceramide containing immature ceramide. The protein is Glucosylceramidase of Aspergillus fumigatus (Neosartorya fumigata).